The chain runs to 148 residues: Glutamyl-tRNA(Gln) amidotransferase subunit C, mitochondrial (148 aa).

This sequence belongs to the GatC family. Subunit of the heterotrimeric GatCAB amidotransferase (AdT) complex, composed of A, B and C subunits.

The protein localises to the mitochondrion. It catalyses the reaction L-glutamyl-tRNA(Gln) + L-glutamine + ATP + H2O = L-glutaminyl-tRNA(Gln) + L-glutamate + ADP + phosphate + H(+). Functionally, allows the formation of correctly charged Gln-tRNA(Gln) through the transamidation of misacylated Glu-tRNA(Gln) in the mitochondria. The reaction takes place in the presence of glutamine and ATP through an activated gamma-phospho-Glu-tRNA(Gln). This is Glutamyl-tRNA(Gln) amidotransferase subunit C, mitochondrial from Drosophila melanogaster (Fruit fly).